The sequence spans 506 residues: 2,3-bisphosphoglycerate-independent phosphoglycerate mutase (506 aa).

Mn(2+) is bound by residues Asp-13 and Ser-63. Catalysis depends on Ser-63, which acts as the Phosphoserine intermediate. Residues His-124, Arg-153–Asp-154, Arg-183, Arg-189, Arg-254–Arg-257, and Lys-330 each bind substrate. Mn(2+)-binding residues include Asp-396, His-400, Asp-437, His-438, and His-456.

The protein belongs to the BPG-independent phosphoglycerate mutase family. Monomer. Requires Mn(2+) as cofactor.

The enzyme catalyses (2R)-2-phosphoglycerate = (2R)-3-phosphoglycerate. Its pathway is carbohydrate degradation; glycolysis; pyruvate from D-glyceraldehyde 3-phosphate: step 3/5. Catalyzes the interconversion of 2-phosphoglycerate and 3-phosphoglycerate. In Cereibacter sphaeroides (strain ATCC 17029 / ATH 2.4.9) (Rhodobacter sphaeroides), this protein is 2,3-bisphosphoglycerate-independent phosphoglycerate mutase.